We begin with the raw amino-acid sequence, 978 residues long: uncharacterized protein (978 aa).

An N-terminal signal peptide occupies residues 1–27 (MHSWKKKLVVSQLALACTLAITSQANA). The Autotransporter domain maps to 713–978 (GLADNGGAWV…SANVGVKYTW (266 aa)).

This is an uncharacterized protein from Salmonella typhimurium (strain LT2 / SGSC1412 / ATCC 700720).